The chain runs to 130 residues: Large ribosomal subunit protein bL12 (130 aa).

It belongs to the bacterial ribosomal protein bL12 family. As to quaternary structure, homodimer. Part of the ribosomal stalk of the 50S ribosomal subunit. Forms a multimeric L10(L12)X complex, where L10 forms an elongated spine to which 2 to 4 L12 dimers bind in a sequential fashion. Binds GTP-bound translation factors.

Its function is as follows. Forms part of the ribosomal stalk which helps the ribosome interact with GTP-bound translation factors. Is thus essential for accurate translation. This Yersinia pestis bv. Antiqua (strain Angola) protein is Large ribosomal subunit protein bL12.